Reading from the N-terminus, the 158-residue chain is 6,7-dimethyl-8-ribityllumazine synthase (158 aa).

Residues phenylalanine 22, 57 to 59 (AFE), and 81 to 83 (AVI) each bind 5-amino-6-(D-ribitylamino)uracil. 86–87 (GT) is a binding site for (2S)-2-hydroxy-3-oxobutyl phosphate. Histidine 89 functions as the Proton donor in the catalytic mechanism. Position 114 (phenylalanine 114) interacts with 5-amino-6-(D-ribitylamino)uracil. Arginine 128 is a (2S)-2-hydroxy-3-oxobutyl phosphate binding site.

Belongs to the DMRL synthase family. As to quaternary structure, forms an icosahedral capsid composed of 60 subunits, arranged as a dodecamer of pentamers.

It catalyses the reaction (2S)-2-hydroxy-3-oxobutyl phosphate + 5-amino-6-(D-ribitylamino)uracil = 6,7-dimethyl-8-(1-D-ribityl)lumazine + phosphate + 2 H2O + H(+). It functions in the pathway cofactor biosynthesis; riboflavin biosynthesis; riboflavin from 2-hydroxy-3-oxobutyl phosphate and 5-amino-6-(D-ribitylamino)uracil: step 1/2. Its function is as follows. Catalyzes the formation of 6,7-dimethyl-8-ribityllumazine by condensation of 5-amino-6-(D-ribitylamino)uracil with 3,4-dihydroxy-2-butanone 4-phosphate. This is the penultimate step in the biosynthesis of riboflavin. The sequence is that of 6,7-dimethyl-8-ribityllumazine synthase from Shewanella amazonensis (strain ATCC BAA-1098 / SB2B).